Reading from the N-terminus, the 220-residue chain is RNA-free ribonuclease P (220 aa).

Belongs to the HARP family.

The catalysed reaction is Endonucleolytic cleavage of RNA, removing 5'-extranucleotides from tRNA precursor.. Its function is as follows. RNA-free RNase P that catalyzes the removal of the 5'-leader sequence from pre-tRNA to produce the mature 5'-terminus. The chain is RNA-free ribonuclease P from Methanothermobacter thermautotrophicus (strain ATCC 29096 / DSM 1053 / JCM 10044 / NBRC 100330 / Delta H) (Methanobacterium thermoautotrophicum).